The sequence spans 89 residues: Small ribosomal subunit protein uS15 (89 aa).

The protein belongs to the universal ribosomal protein uS15 family. As to quaternary structure, part of the 30S ribosomal subunit. Forms a bridge to the 50S subunit in the 70S ribosome, contacting the 23S rRNA.

Functionally, one of the primary rRNA binding proteins, it binds directly to 16S rRNA where it helps nucleate assembly of the platform of the 30S subunit by binding and bridging several RNA helices of the 16S rRNA. In terms of biological role, forms an intersubunit bridge (bridge B4) with the 23S rRNA of the 50S subunit in the ribosome. The sequence is that of Small ribosomal subunit protein uS15 from Photorhabdus luminescens (Xenorhabdus luminescens).